A 466-amino-acid polypeptide reads, in one-letter code: MRVITRFAPSPTGSLHLGGARTALFNWLFARRHGGQFLLRMEDTDQERSSETVAQSIIEDMAWLGLHHDQDVVIQSARRERHTQVAEELLARGKAYYCYCSEDDIAAEKLRHENEGKHYRHHCPSRDANHAQSGTAGVLRLKSPENREIKFTDGVYGEISVSSEQIDDMVILRSNGHPTYLLAVVVDDHDMCITHIIRGSDHITNTIKQMLLAEAMGWDNPQFCHIPLIHDEGGAKLSKRNRAPGVHEYRELGFLPEAVCNYLLRMGWSHKDEEIITMQSATQLFSIEKIGTSHSCLDSKKLLFLNHHYMNQKTELEILGLLLPFLEQELGHTVAETKLARLSLGVKKLMERAKTLADLARDSVFYVQNIPISVDDDAKQVILKSSELLAKLVGAMSQIEPKTWTKDFLSSYIKEWTKSNDVVISDVYHLLRAAIAGRLSTPSISEVMEILGQEECISRLRFFLNS.

The 'HIGH' region signature appears at 9-19 (PSPTGSLHLGG). The 'KMSKS' region motif lies at 236-240 (KLSKR). Position 239 (Lys-239) interacts with ATP.

Belongs to the class-I aminoacyl-tRNA synthetase family. Glutamate--tRNA ligase type 1 subfamily. Monomer.

It is found in the cytoplasm. The enzyme catalyses tRNA(Glu) + L-glutamate + ATP = L-glutamyl-tRNA(Glu) + AMP + diphosphate. Functionally, catalyzes the attachment of glutamate to tRNA(Glu) in a two-step reaction: glutamate is first activated by ATP to form Glu-AMP and then transferred to the acceptor end of tRNA(Glu). In Anaplasma marginale (strain St. Maries), this protein is Glutamate--tRNA ligase 2.